The chain runs to 340 residues: Probable cyclic nucleotide phosphodiesterase PsycPRwf_0181 (340 aa).

The tract at residues 1-36 is disordered; that stretch reads MAPLPHSVSPRHTQVADNGRLSEPTDYHPPTEISTD. Fe cation-binding residues include Asp47, His49, Asp128, Asn158, His237, His276, and His278. AMP is bound by residues His49, Asp128, and 158–159; that span reads NH. Residue His278 participates in AMP binding.

It belongs to the cyclic nucleotide phosphodiesterase class-III family. Fe(2+) is required as a cofactor.

This Psychrobacter sp. (strain PRwf-1) protein is Probable cyclic nucleotide phosphodiesterase PsycPRwf_0181.